Here is a 423-residue protein sequence, read N- to C-terminus: Pleckstrin homology domain-containing family O member 1 (423 aa).

Disordered stretches follow at residues 1-21 (MEKN…SAQP), 81-100 (RKSK…AHSR), and 217-277 (LAAG…HSEK). The span at 7–20 (AKRGQQDGNQQSAQ) shows a compositional bias: polar residues. Residues 20 to 131 (QPEKVGWVRK…WINALNSAIT (112 aa)) enclose the PH domain. Residues 83 to 92 (SKSRSKKNHS) show a composition bias toward basic residues. Positions 222-259 (RRSDSENVKLSEKGRSGTLPRHEVTSWDKPTQRKDSLD) are enriched in basic and acidic residues.

In terms of processing, C-terminal fragments could be released during apoptosis via caspase-3-dependent cleavage.

The protein localises to the membrane. The protein resides in the nucleus. It localises to the cytoplasm. Its function is as follows. Plays a role in the regulation of the actin cytoskeleton through its interactions with actin capping protein (CP). The polypeptide is Pleckstrin homology domain-containing family O member 1 (PLEKHO1) (Gallus gallus (Chicken)).